The chain runs to 266 residues: Sec-independent protein translocase protein TatC (266 aa).

6 consecutive transmembrane segments (helical) span residues 28–48, 93–113, 134–154, 183–203, 221–241, and 242–262; these read MIIA…YILF, FNIY…PYIF, GIIM…YFIL, LIMH…FIYF, HAFL…IFST, and IVVL…SFYV.

It belongs to the TatC family. In terms of assembly, forms a complex with TatA.

The protein resides in the cell inner membrane. Functionally, part of the twin-arginine translocation (Tat) system that transports large folded proteins containing a characteristic twin-arginine motif in their signal peptide across membranes. This Blattabacterium sp. subsp. Periplaneta americana (strain BPLAN) (Periplaneta americana symbiotic bacterium) protein is Sec-independent protein translocase protein TatC.